A 550-amino-acid polypeptide reads, in one-letter code: Hydroxylamine reductase (550 aa).

The [2Fe-2S] cluster site is built by Cys-3, Cys-6, Cys-18, and Cys-25. Hybrid [4Fe-2O-2S] cluster contacts are provided by His-249, Glu-273, Cys-317, Cys-405, Cys-433, Cys-458, Glu-492, and Lys-494. Cys-405 carries the post-translational modification Cysteine persulfide.

Belongs to the HCP family. It depends on [2Fe-2S] cluster as a cofactor. The cofactor is hybrid [4Fe-2O-2S] cluster.

It localises to the cytoplasm. The enzyme catalyses A + NH4(+) + H2O = hydroxylamine + AH2 + H(+). Catalyzes the reduction of hydroxylamine to form NH(3) and H(2)O. The polypeptide is Hydroxylamine reductase (Yersinia pseudotuberculosis serotype IB (strain PB1/+)).